Consider the following 382-residue polypeptide: Apolipoprotein A-IV (382 aa).

An N-terminal signal peptide occupies residues 1–20 (MFLKAVVLSLALVAVTGARA). 13 consecutive repeat copies span residues 33 to 54 (DYFS…KSEL), 60 to 81 (TLFQ…KKLV), 82 to 103 (PFAT…EEIR), 115 to 136 (PHAT…QRLG), 137 to 158 (PFTG…RQLK), 159 to 180 (PYAE…ASVA), 181 to 202 (PYAD…GSLT), 203 to 224 (PYAE…RSLA), 225 to 246 (PYAQ…FQMK), 247 to 268 (KQAE…QKLV), 269 to 286 (PVAE…EGLQ), 287 to 308 (KSLL…LKVE), and 309 to 330 (PYGE…QKLG). Positions 33-330 (DYFSQLGSNA…QVEDLRQKLG (298 aa)) are 13 X 22 AA approximate tandem repeats. The tract at residues 361–382 (EASQGQSQALPAQEKAQAPLEG) is disordered.

It belongs to the apolipoprotein A1/A4/E family. In terms of assembly, homodimer. Secreted in plasma.

The protein resides in the secreted. May have a role in chylomicrons and VLDL secretion and catabolism. Required for efficient activation of lipoprotein lipase by ApoC-II; potent activator of LCAT. Apoa-IV is a major component of HDL and chylomicrons. This chain is Apolipoprotein A-IV (APOA4), found in Sus scrofa (Pig).